The primary structure comprises 263 residues: Caveolae-associated protein 3 (263 aa).

Positions 1–84 (MGESALEPGP…SNTLAQLLAK (84 aa)) are interaction with CAVIN1. Positions 20–78 (VHAVTVVTLLEKLATMLEALRERQGGLAERQGGLAGSVRRIQSGLGALSRSHDTTSNTL) are leucine-zipper. Residues Ser62 and Ser70 each carry the phosphoserine modification. Residue Lys128 forms a Glycyl lysine isopeptide (Lys-Gly) (interchain with G-Cter in SUMO2) linkage. Positions 135-203 (ARAFQKAPEL…SSRKGSEAAQ (69 aa)) are interaction with CAV1. Positions 141–263 (APELLGPEDQ…RPVLQIESAA (123 aa)) are disordered. A compositionally biased stretch (acidic residues) spans 157–170 (QPEDEVGESSDEEP). Residues Ser165, Ser166, Ser173, and Ser199 each carry the phosphoserine modification. The span at 219 to 234 (EGPAEGQPAAQPAMEP) shows a compositional bias: low complexity.

It belongs to the CAVIN family. As to quaternary structure, component of the CAVIN complex composed of CAVIN1, CAVIN2, CAVIN3 and CAVIN4. Interacts with PRKCD and with phosphatidylserine. Phosphatidylserine may form a bridge between PKC and PKC-binding partners and stabilize the binding. Interacts with PER2. Interacts with CAVIN1 and EPS15L1. Interacts (via leucine-zipper domain) with CAV1 in a cholesterol-sensitive manner. In vitro, phosphorylated by PRKCD.

The protein localises to the cytoplasm. The protein resides in the membrane. It localises to the caveola. Its subcellular location is the cytosol. Its function is as follows. Regulates the traffic and/or budding of caveolae. Plays a role in caveola formation in a tissue-specific manner. Required for the formation of caveolae in smooth muscle but not in the lung and heart endothelial cells. Regulates the equilibrium between cell surface-associated and cell surface-dissociated caveolae by promoting the rapid release of caveolae from the cell surface. Plays a role in the regulation of the circadian clock. Modulates the period length and phase of circadian gene expression and also regulates expression and interaction of the core clock components PER1/2 and CRY1/2. Seems to have an immune potentiation function, especially in the glioma. The sequence is that of Caveolae-associated protein 3 from Rattus norvegicus (Rat).